A 228-amino-acid chain; its full sequence is ATP-dependent dethiobiotin synthetase BioD 1 (228 aa).

Residue Glu-13–Val-18 coordinates ATP. Residue Thr-17 participates in Mg(2+) binding. Lys-38 is an active-site residue. Residue Ser-42 coordinates substrate. Residues Asp-55, Glu-116 to Gly-119, Asn-176 to Asp-177, and Pro-205 to Leu-207 each bind ATP. Residues Asp-55 and Glu-116 each contribute to the Mg(2+) site.

This sequence belongs to the dethiobiotin synthetase family. In terms of assembly, homodimer. Mg(2+) serves as cofactor.

Its subcellular location is the cytoplasm. The enzyme catalyses (7R,8S)-7,8-diammoniononanoate + CO2 + ATP = (4R,5S)-dethiobiotin + ADP + phosphate + 3 H(+). The protein operates within cofactor biosynthesis; biotin biosynthesis; biotin from 7,8-diaminononanoate: step 1/2. Functionally, catalyzes a mechanistically unusual reaction, the ATP-dependent insertion of CO2 between the N7 and N8 nitrogen atoms of 7,8-diaminopelargonic acid (DAPA, also called 7,8-diammoniononanoate) to form a ureido ring. The protein is ATP-dependent dethiobiotin synthetase BioD 1 of Salmonella typhi.